Here is a 333-residue protein sequence, read N- to C-terminus: GTP 3',8-cyclase (333 aa).

Positions 7 to 221 (KFGRVHDYIR…FEACNEAGYE (215 aa)) constitute a Radical SAM core domain. Arg-16 contacts GTP. Residues Cys-23 and Cys-27 each coordinate [4Fe-4S] cluster. S-adenosyl-L-methionine is bound at residue Tyr-29. [4Fe-4S] cluster is bound at residue Cys-30. A GTP-binding site is contributed by Arg-66. Gly-70 lines the S-adenosyl-L-methionine pocket. Position 97 (Thr-97) interacts with GTP. Ser-121 provides a ligand contact to S-adenosyl-L-methionine. Residue Lys-158 coordinates GTP. Position 192 (Met-192) interacts with S-adenosyl-L-methionine. [4Fe-4S] cluster is bound by residues Cys-257 and Cys-260. 262-264 (RLR) serves as a coordination point for GTP. Residue Cys-274 participates in [4Fe-4S] cluster binding.

It belongs to the radical SAM superfamily. MoaA family. As to quaternary structure, monomer and homodimer. It depends on [4Fe-4S] cluster as a cofactor.

The catalysed reaction is GTP + AH2 + S-adenosyl-L-methionine = (8S)-3',8-cyclo-7,8-dihydroguanosine 5'-triphosphate + 5'-deoxyadenosine + L-methionine + A + H(+). It functions in the pathway cofactor biosynthesis; molybdopterin biosynthesis. In terms of biological role, catalyzes the cyclization of GTP to (8S)-3',8-cyclo-7,8-dihydroguanosine 5'-triphosphate. This Listeria monocytogenes serovar 1/2a (strain ATCC BAA-679 / EGD-e) protein is GTP 3',8-cyclase.